The chain runs to 43 residues: Protein PsbN (43 aa).

The helical transmembrane segment at 7–24 (VAISISRSLVSFTGYALY) threads the bilayer.

The protein belongs to the PsbN family.

Its subcellular location is the plastid. It is found in the chloroplast thylakoid membrane. Functionally, may play a role in photosystem I and II biogenesis. The chain is Protein PsbN from Ginkgo biloba (Ginkgo).